We begin with the raw amino-acid sequence, 614 residues long: 1-deoxy-D-xylulose-5-phosphate synthase (614 aa).

Thiamine diphosphate is bound by residues histidine 76 and 117–119 (GHS). Aspartate 148 is a binding site for Mg(2+). Residues 149–150 (GA), asparagine 177, tyrosine 285, and glutamate 366 contribute to the thiamine diphosphate site. Asparagine 177 contacts Mg(2+).

It belongs to the transketolase family. DXPS subfamily. As to quaternary structure, homodimer. It depends on Mg(2+) as a cofactor. Requires thiamine diphosphate as cofactor.

It carries out the reaction D-glyceraldehyde 3-phosphate + pyruvate + H(+) = 1-deoxy-D-xylulose 5-phosphate + CO2. The protein operates within metabolic intermediate biosynthesis; 1-deoxy-D-xylulose 5-phosphate biosynthesis; 1-deoxy-D-xylulose 5-phosphate from D-glyceraldehyde 3-phosphate and pyruvate: step 1/1. Catalyzes the acyloin condensation reaction between C atoms 2 and 3 of pyruvate and glyceraldehyde 3-phosphate to yield 1-deoxy-D-xylulose-5-phosphate (DXP). This is 1-deoxy-D-xylulose-5-phosphate synthase from Pasteurella multocida (strain Pm70).